The primary structure comprises 1622 residues: ABC transporter C family member 1 (1622 aa).

Helical transmembrane passes span 37 to 57 (FVLGISHLVLLILCLYRLWLI), 73 to 93 (FSYFLALLAAYATAEPLFRLV), 110 to 130 (EAFMLVLEAFAWGSALVMTVV), 145 to 165 (FAVIYALVGDMVLLNLVLSVK), 174 to 194 (YLYISEVAVQVAFGTLLFVYF), 336 to 356 (AWIGYIYAISIFVGVVLGVLC), 440 to 460 (VASIIGALFLVLMFPIQTVII), 527 to 547 (FILNSIPVLVTVVSFGVFSLL), and 557 to 577 (FTSLSLFSVLRFPLFMLPNII). The region spanning 302 to 582 (FWWGGFWKIG…LPNIITQMVN (281 aa)) is the ABC transmembrane type-1 1 domain. In terms of domain architecture, ABC transporter 1 spans 614–838 (ISIRNGYFSW…GPLFQRLMEN (225 aa)). An ATP-binding site is contributed by 649–656 (GSTGEGKT). A disordered region spans residues 852 to 876 (AEVDQTSVKPVENGNANNLQKDGIE). The span at 855–871 (DQTSVKPVENGNANNLQ) shows a compositional bias: polar residues. 6 helical membrane-spanning segments follow: residues 909 to 929 (ALGGAWVVMMLVICYVLTQVF), 951 to 971 (PLFYNIVYALLSFGQVSVTLI), 1027 to 1049 (AVFVNMFMGSIAQLLSTVILIGI), 1053 to 1072 (LSLWAIMPLLVVFYGAYLYY), 1138 to 1158 (LGIRLEVLGGLMVWLTASLAV), and 1172 to 1192 (STMGLLLSYALSITSSLTAVL). The ABC transmembrane type-1 2 domain occupies 916-1200 (VMMLVICYVL…VLRLASLAEN (285 aa)). The segment at 1231–1246 (WPSSGSIKFEDVVLRY) is interaction with calmodulin and FKP42/TWD1. One can recognise an ABC transporter 2 domain in the interval 1237 to 1471 (IKFEDVVLRY…GESSFSKMVQ (235 aa)). Residue 1271 to 1278 (GRTGAGKS) coordinates ATP.

It belongs to the ABC transporter superfamily. ABCC family. Conjugate transporter (TC 3.A.1.208) subfamily. In terms of assembly, interacts with calmodulin (CaM), PAS1 and FKBP42/TWD1. In terms of tissue distribution, ubiquitous, with higher levels in leaves and stems and lower levels in roots. Localized in the root apex, root hair tips and root epidermis.

The protein resides in the vacuole membrane. It carries out the reaction ATP + H2O + xenobioticSide 1 = ADP + phosphate + xenobioticSide 2.. Functionally, pump for glutathione S-conjugates. Mediates the transport of S-(2,4-dinitrophenyl)-glutathione (DNP-GS), GSSG, cyanidin 3-glucoside-GS (C3G-GS) and metolachlor-GS (MOC-GS). This Arabidopsis thaliana (Mouse-ear cress) protein is ABC transporter C family member 1 (ABCC1).